The primary structure comprises 234 residues: Acetylxylan esterase 2 (234 aa).

The first 17 residues, 1–17 (MHSKFFAASLLGLGAAA), serve as a signal peptide directing secretion. The propeptide occupies 18 to 27 (IPLEGVMEKR). Cystine bridges form between Cys29/Cys106 and Cys73/Cys79. Ser117 is a catalytic residue. Disulfide bonds link Cys128–Cys188, Cys174–Cys206, and Cys198–Cys205. Asp202 is an active-site residue. Asn207 is a glycosylation site (N-linked (GlcNAc...) asparagine). His214 is an active-site residue.

This sequence belongs to the cutinase family. Acetylxylan esterase subfamily. As to quaternary structure, monomer.

Its subcellular location is the secreted. The catalysed reaction is Deacetylation of xylans and xylo-oligosaccharides.. The protein operates within glycan degradation; xylan degradation. In terms of biological role, degrades acetylated xylans by cleaving acetyl side groups from the hetero-xylan backbone. In Talaromyces purpureogenus (Soft rot fungus), this protein is Acetylxylan esterase 2 (axe-2).